Consider the following 475-residue polypeptide: Enolase (475 aa).

Gln179 is a (2R)-2-phosphoglycerate binding site. Residue Glu221 is the Proton donor of the active site. Asp258, Glu312, and Asp339 together coordinate Mg(2+). Lys364, Arg393, Ser394, and Lys415 together coordinate (2R)-2-phosphoglycerate. Lys364 serves as the catalytic Proton acceptor. Residues 454 to 475 are disordered; that stretch reads STPAATPKKSPAKKTTKAKSKK. Residues 463–475 show a composition bias toward basic residues; that stretch reads SPAKKTTKAKSKK.

Belongs to the enolase family. It depends on Mg(2+) as a cofactor.

The protein localises to the cell membrane. It is found in the cytoplasm. Its subcellular location is the secreted. It localises to the cell surface. The enzyme catalyses (2R)-2-phosphoglycerate = phosphoenolpyruvate + H2O. It participates in carbohydrate degradation; glycolysis; pyruvate from D-glyceraldehyde 3-phosphate: step 4/5. Its function is as follows. Catalyzes the reversible conversion of 2-phosphoglycerate (2-PG) into phosphoenolpyruvate (PEP). It is essential for the degradation of carbohydrates via glycolysis. 'Moonlights' as a plasminogen receptor. Binds host (chicken) plasminogen; enolase antiserum inhibits M.gallisepticum adherence to chicken embryo fibroblasts. In Mycoplasmoides gallisepticum (strain R(low / passage 15 / clone 2)) (Mycoplasma gallisepticum), this protein is Enolase.